Reading from the N-terminus, the 496-residue chain is Maintenance of mitochondrial morphology protein 1 (496 aa).

Topologically, residues 1–22 are lumenal; the sequence is MSSQLNDPTPIPAQSSLSFTQG. A helical membrane pass occupies residues 23–43; that stretch reads FLLGQLSVVLLIAAFIKFFIF. Over 44-496 the chain is Cytoplasmic; sequence GEAPPPPSRG…SLPGGGVTTT (453 aa). Disordered regions lie at residues 50-96, 276-331, 395-433, and 449-496; these read PSRG…VPSS, PLDT…KSNV, GRTGVRTGDDSETGSNAPRSSTAADASGPAHHEDSSREP, and DLAS…VTTT. The segment covering 54–64 has biased composition (basic residues); the sequence is LSHRSATHRRS. The span at 65-74 shows a compositional bias: polar residues; sequence NSIYSSTQHD. Positions 75 to 84 are enriched in basic and acidic residues; that stretch reads GNTRTLREKP. The span at 85–96 shows a compositional bias: polar residues; sequence SNSNVLRPVPSS. The region spanning 131–388 is the SMP-LTD domain; that stretch reads QPESLDWFNV…EPRVQVVGLP (258 aa). Pro residues predominate over residues 276–287; the sequence is PLDTPSHSPSPP. The segment covering 407-418 has biased composition (polar residues); it reads TGSNAPRSSTAA. 2 stretches are compositionally biased toward basic and acidic residues: residues 424 to 433 and 462 to 474; these read AHHEDSSREP and GDLRSRSMTREES.

This sequence belongs to the MMM1 family. Homodimer. Component of the ER-mitochondria encounter structure (ERMES) or MDM complex, composed of mmm1, mdm10, mdm12 and mdm34. A mmm1 homodimer associates with one molecule of mdm12 on each side in a pairwise head-to-tail manner, and the SMP-LTD domains of mmm1 and mdm12 generate a continuous hydrophobic tunnel for phospholipid trafficking.

The protein localises to the endoplasmic reticulum membrane. Component of the ERMES/MDM complex, which serves as a molecular tether to connect the endoplasmic reticulum (ER) and mitochondria. Components of this complex are involved in the control of mitochondrial shape and protein biogenesis, and function in nonvesicular lipid trafficking between the ER and mitochondria. The mdm12-mmm1 subcomplex functions in the major beta-barrel assembly pathway that is responsible for biogenesis of all outer membrane beta-barrel proteins, and acts in a late step after the SAM complex. The mdm10-mdm12-mmm1 subcomplex further acts in the TOM40-specific pathway after the action of the mdm12-mmm1 complex. Essential for establishing and maintaining the structure of mitochondria and maintenance of mtDNA nucleoids. The protein is Maintenance of mitochondrial morphology protein 1 of Neosartorya fischeri (strain ATCC 1020 / DSM 3700 / CBS 544.65 / FGSC A1164 / JCM 1740 / NRRL 181 / WB 181) (Aspergillus fischerianus).